The primary structure comprises 791 residues: DNA repair and recombination protein RAD54-like (791 aa).

The segment covering 1–20 has biased composition (polar residues); the sequence is MRRSLAPSQRIGQSTASRNA. The disordered stretch occupies residues 1-53; it reads MRRSLAPSQRIGQSTASRNAFTPPLLQKKNKRACQKDLRLDTDADEDKERKRF. The required for chromatin remodeling, strand pairing activities and coupling of ATPase activity stretch occupies residues 2 to 9; that stretch reads RRSLAPSQ. Phosphothreonine is present on Thr-22. The segment covering 34–53 has biased composition (basic and acidic residues); the sequence is CQKDLRLDTDADEDKERKRF. Positions 175–349 constitute a Helicase ATP-binding domain; sequence EGKKGDFNGC…FSLVNFVNPE (175 aa). 188-195 is a binding site for ATP; it reads DEMGLGKT. A DEGH box motif is present at residues 300–303; the sequence is DEGH. Positions 506 to 663 constitute a Helicase C-terminal domain; the sequence is LLDFMLAAIR…NNESSEKHFT (158 aa). Positions 747-791 are disordered; it reads KEVVESPESAAAEAESVEEESQPTQRKRPSPPLSDDSADEDFIGF. A compositionally biased stretch (acidic residues) spans 782–791; it reads DSADEDFIGF.

This sequence belongs to the SNF2/RAD54 helicase family. Interacts (via N-terminus) with spn-A/Rad51.

The protein resides in the nucleus. Its function is as follows. Involved in mitotic DNA repair and meiotic recombination. Functions in the recombinational DNA repair pathway. Essential for interhomolog gene conversion (GC), but may have a less important role in intersister GC than spn-A/Rad51. In the presence of DNA, spn-A/Rad51 enhances the ATPase activity of okr/Rad54. In Drosophila ananassae (Fruit fly), this protein is DNA repair and recombination protein RAD54-like.